Consider the following 153-residue polypeptide: ORM1-like protein 3 (153 aa).

An important for ceramide level-sensing region spans residues Met-1–Met-17. Topologically, residues Met-1–Gly-21 are cytoplasmic. 2 helical membrane passes run Ile-22–Phe-42 and Val-43–Phe-63. Topologically, residues Leu-64–Gln-94 are cytoplasmic. Residues Phe-95–Thr-117 traverse the membrane as a helical segment. At Lys-118–Gln-121 the chain is on the extracellular side. A helical membrane pass occupies residues Ile-122–Leu-142. Pro-137 is subject to Hydroxyproline. The Cytoplasmic segment spans residues His-143–Tyr-153.

It belongs to the ORM family. In terms of assembly, ceramide-sensitive subunit of the serine palmitoyltransferase (SPT) complex, which is also composed of SPTLC1, SPTLC2/3 and SPTSSA/B. Post-translationally, when hydroxylated at Pro-137, ubiquitinated via 'Lys-48'-linkage, leading to proteasomal degradation. In endothelial cells, ORMDL3 proteasomal degradation is controlled by the sphingosine 1-phosphate receptor signaling pathway.

It is found in the endoplasmic reticulum membrane. Its function is as follows. Plays an essential role in the homeostatic regulation of sphingolipid de novo biosynthesis by modulating the activity of the serine palmitoyltransferase (SPT) in response to ceramide levels. When complexed to SPT, the binding of ceramides to its N-terminus stabilizes a conformation that block SPT substrate entry, hence preventing SPT catalytic activity. Through this mechanism, maintains ceramide levels at sufficient concentrations for the production of complex sphingolipids, but which prevents the accumulation of ceramides to levels that trigger apoptosis. The protein is ORM1-like protein 3 (ORMDL3) of Bos taurus (Bovine).